The primary structure comprises 374 residues: 1,3,6,8-tetrahydroxynaphthalene synthase (374 aa).

Cys138 is an active-site residue.

The protein belongs to the thiolase-like superfamily. Chalcone/stilbene synthases family. Homodimer.

It catalyses the reaction 5 malonyl-CoA + 5 H(+) = naphthalene-1,3,6,8-tetrol + 5 CO2 + 5 CoA + H2O. It functions in the pathway pigment biosynthesis; melanin biosynthesis. Functionally, involved in the biosynthesis of melanin but also various secondary metabolites containing a naphthoquinone ring. Catalyzes the iterative condensation of five CoA-linked malonyl units to form a pentaketide intermediate. THNS subsequently catalyzes the dual intramolecular Claisen and aldol condensations of this linear intermediate to produce the fused ring of 1,3,6,8-tetrahydroxynaphthalene (THN). The polypeptide is 1,3,6,8-tetrahydroxynaphthalene synthase (Streptomyces coelicolor (strain ATCC BAA-471 / A3(2) / M145)).